Consider the following 326-residue polypeptide: Polycomb complex protein BMI-1 (326 aa).

The RING-type zinc finger occupies 18–57; sequence CVLCGGYFIDATTIIECLHSFCKTCIVRYLETSKYCPICD. The Nuclear localization signal motif lies at 81–95; it reads KLVPGLFKNEMKRRR. Residues 162–182 are interaction with PHC2; it reads RYLRCPAAMTVMHLRKFLRSK. Positions 164-228 are interaction with E4F1; the sequence is LRCPAAMTVM…GPLPLKYRVR (65 aa). The segment at 236–326 is disordered; it reads ISHQRDGLTN…VNGSSATSSG (91 aa). 3 stretches are compositionally biased toward low complexity: residues 266–278, 290–303, and 315–326; these read PSTS…PSTP, SSTM…PSGN, and SSVNGSSATSSG.

As to quaternary structure, component of a PRC1-like complex. Identified in a PRC1-like HPRC-H complex with CBX2, CBX4, CBX8, PHC1, PHC2, PHC3 RING1 and RNF2. Interacts with RNF2/RING2. Interacts with RING1. Part of a complex that contains RNF2, UB2D3 and BMI1, where RNF2 and BMI1 form a tight heterodimer, and UB2D3 interacts only with RNF2. The complex composed of RNF2, UB2D3 and BMI1 binds nucleosomes, and has activity only with nucleosomal histone H2A. Interacts with CBX7 and CBX8. Interacts with SPOP. Part of a complex consisting of BMI1, CUL3 and SPOP. Interacts with E4F1. Interacts with PHC2. Interacts with zinc finger protein ZNF277. May be part of a complex including at least ZNF277, BMI1 and RNF2/RING2. Post-translationally, may be polyubiquitinated; which does not lead to proteasomal degradation. Monoubiquitinated.

The protein localises to the nucleus. The protein resides in the cytoplasm. In terms of biological role, component of a Polycomb group (PcG) multiprotein PRC1-like complex, a complex class required to maintain the transcriptionally repressive state of many genes, including Hox genes, throughout development. PcG PRC1 complex acts via chromatin remodeling and modification of histones; it mediates monoubiquitination of histone H2A 'Lys-119', rendering chromatin heritably changed in its expressibility. The complex composed of RNF2, UB2D3 and BMI1 binds nucleosomes, and has activity only with nucleosomal histone H2A. In the PRC1-like complex, regulates the E3 ubiquitin-protein ligase activity of RNF2/RING2. The polypeptide is Polycomb complex protein BMI-1 (BMI1) (Bos taurus (Bovine)).